Reading from the N-terminus, the 382-residue chain is Nuclear hormone receptor family member nhr-106 (382 aa).

Positions 2–78 (QTTCEICEVP…MGMMPEKVKV (77 aa)) form a DNA-binding region, nuclear receptor. 2 NR C4-type zinc fingers span residues 5 to 25 (CEIC…CRGC) and 42 to 61 (CKYS…CKSC). Positions 110-380 (DVSNLITRGL…FSNPEMFIDS (271 aa)) constitute an NR LBD domain.

Belongs to the nuclear hormone receptor family.

Its subcellular location is the nucleus. Orphan nuclear receptor. This Caenorhabditis elegans protein is Nuclear hormone receptor family member nhr-106 (nhr-106).